Consider the following 314-residue polypeptide: Vomeronasal type-1 receptor 95 (314 aa).

Topologically, residues 1 to 18 are extracellular; it reads MNKDNTLYCSAYRIAFFS. A helical transmembrane segment spans residues 19–39; the sequence is EIGIGISANSCLLLFHTFMFI. Residues 40–48 are Cytoplasmic-facing; that stretch reads RGHRPRLTD. A helical transmembrane segment spans residues 49-69; it reads LPIGLVALIHLVMLLLAAYIT. Topologically, residues 70-88 are extracellular; sequence EDFFMSSGGWDDITCKLFI. A disulfide bridge links cysteine 84 with cysteine 171. Residues 89–113 form a helical membrane-spanning segment; sequence FLHRFFRSLSVCDTCMLSVFQAIIL. Over 114–133 the chain is Cytoplasmic; it reads CPQSSHLAKFKLNSPHHLSC. The helical transmembrane segment at 134 to 154 threads the bilayer; sequence FFIFMSIFYTSISSHILIAAI. The Extracellular segment spans residues 155–186; the sequence is ATQNLTSVNLIYITKSCSFLPMSSSMQRTFST. N-linked (GlcNAc...) asparagine glycosylation is present at asparagine 158. A helical transmembrane segment spans residues 187 to 207; sequence LLAFRNVFLIGLMGLSTCYMA. At 208-235 the chain is on the cytoplasmic side; that stretch reads TLLCRHKTRSQQLQNSKLSPKATPEQRA. The chain crosses the membrane as a helical span at residues 236 to 256; sequence IWTILMLMSFFLIISTFDSIM. At 257–268 the chain is on the extracellular side; sequence TYSRTIFQGNQS. A glycan (N-linked (GlcNAc...) asparagine) is linked at asparagine 266. The helical transmembrane segment at 269-289 threads the bilayer; it reads LYCVQIPVAHGYAAFSPLLVL. At 290-314 the chain is on the cytoplasmic side; that stretch reads NNEKRLTSLMISMYDRIVRLESLCS.

It belongs to the G-protein coupled receptor 1 family.

Its subcellular location is the cell membrane. In terms of biological role, putative pheromone receptor implicated in the regulation of social as well as reproductive behavior. The chain is Vomeronasal type-1 receptor 95 (Vom1r95) from Rattus norvegicus (Rat).